Reading from the N-terminus, the 316-residue chain is Pantothenate kinase (316 aa).

95–102 serves as a coordination point for ATP; sequence GSVAVGKS.

Belongs to the prokaryotic pantothenate kinase family.

The protein resides in the cytoplasm. It catalyses the reaction (R)-pantothenate + ATP = (R)-4'-phosphopantothenate + ADP + H(+). The protein operates within cofactor biosynthesis; coenzyme A biosynthesis; CoA from (R)-pantothenate: step 1/5. This is Pantothenate kinase from Salmonella choleraesuis (strain SC-B67).